Consider the following 115-residue polypeptide: Putative UPF0377 protein YHL045W (115 aa).

A helical transmembrane segment spans residues 10–30 (ACIFIDSVCEGIVFWGLCLFV).

The protein belongs to the UPF0377 family.

The protein localises to the membrane. This chain is Putative UPF0377 protein YHL045W, found in Saccharomyces cerevisiae (strain ATCC 204508 / S288c) (Baker's yeast).